The following is a 638-amino-acid chain: 1-deoxy-D-xylulose-5-phosphate synthase (638 aa).

Residues His-75 and 116–118 (AHS) contribute to the thiamine diphosphate site. Asp-147 provides a ligand contact to Mg(2+). Thiamine diphosphate contacts are provided by residues 148–149 (GA), Asn-177, Tyr-288, and Glu-370. Residue Asn-177 participates in Mg(2+) binding.

It belongs to the transketolase family. DXPS subfamily. Homodimer. It depends on Mg(2+) as a cofactor. The cofactor is thiamine diphosphate.

It catalyses the reaction D-glyceraldehyde 3-phosphate + pyruvate + H(+) = 1-deoxy-D-xylulose 5-phosphate + CO2. Its pathway is metabolic intermediate biosynthesis; 1-deoxy-D-xylulose 5-phosphate biosynthesis; 1-deoxy-D-xylulose 5-phosphate from D-glyceraldehyde 3-phosphate and pyruvate: step 1/1. Functionally, catalyzes the acyloin condensation reaction between C atoms 2 and 3 of pyruvate and glyceraldehyde 3-phosphate to yield 1-deoxy-D-xylulose-5-phosphate (DXP). In Cupriavidus necator (strain ATCC 17699 / DSM 428 / KCTC 22496 / NCIMB 10442 / H16 / Stanier 337) (Ralstonia eutropha), this protein is 1-deoxy-D-xylulose-5-phosphate synthase.